Here is a 252-residue protein sequence, read N- to C-terminus: Proteasome subunit alpha type-3 (252 aa).

This sequence belongs to the peptidase T1A family. The 26S proteasome consists of a 20S proteasome core and two 19S regulatory subunits. The 20S proteasome core is composed of 28 subunits that are arranged in four stacked rings, resulting in a barrel-shaped structure. The two end rings are each formed by seven alpha subunits, and the two central rings are each formed by seven beta subunits. The catalytic chamber with the active sites is on the inside of the barrel.

The protein resides in the cytoplasm. Its subcellular location is the nucleus. Functionally, the proteasome is a multicatalytic proteinase complex which is characterized by its ability to cleave peptides with Arg, Phe, Tyr, Leu, and Glu adjacent to the leaving group at neutral or slightly basic pH. The proteasome has an ATP-dependent proteolytic activity. The polypeptide is Proteasome subunit alpha type-3 (Acanthamoeba castellanii (Amoeba)).